The following is a 308-amino-acid chain: D-alanine--D-alanine ligase (308 aa).

Residues 103–302 enclose the ATP-grasp domain; sequence KTVMATAGVP…FDELVQWMVE (200 aa). Residue 130–184 coordinates ATP; that stretch reads MAPPYVIKPVADGSSVGVFMVTEAHEHPPQELFRDDWPHGEQLLVEKYVAGKELT. Residues D252, E269, and N271 each coordinate Mg(2+).

This sequence belongs to the D-alanine--D-alanine ligase family. It depends on Mg(2+) as a cofactor. Mn(2+) is required as a cofactor.

The protein resides in the cytoplasm. It carries out the reaction 2 D-alanine + ATP = D-alanyl-D-alanine + ADP + phosphate + H(+). The protein operates within cell wall biogenesis; peptidoglycan biosynthesis. Its function is as follows. Cell wall formation. The polypeptide is D-alanine--D-alanine ligase (Rhodopseudomonas palustris (strain BisB18)).